A 255-amino-acid chain; its full sequence is UPF0246 protein CC_3385 (255 aa).

It belongs to the UPF0246 family.

This Caulobacter vibrioides (strain ATCC 19089 / CIP 103742 / CB 15) (Caulobacter crescentus) protein is UPF0246 protein CC_3385.